A 374-amino-acid chain; its full sequence is P2Y purinoceptor 11 (374 aa).

Residues 1 to 29 (MAANVSGAKSCPANFLAAADDKLSGFQGD) lie on the Extracellular side of the membrane. A glycan (N-linked (GlcNAc...) asparagine) is linked at Asn4. The helical transmembrane segment at 30-50 (FLWPILVVEFLVAVASNGLAL) threads the bilayer. Topologically, residues 51 to 64 (YRFSIRKQRPWHPA) are cytoplasmic. Residues 65 to 85 (VVFSVQLAVSDLLCALTLPPL) traverse the membrane as a helical segment. Residues 86–116 (AAYLYPPKHWRYGEAACRLERFLFTCNLLGS) are Extracellular-facing. Residues Cys102 and Cys180 are joined by a disulfide bond. Residues 117 to 137 (VIFITCISLNRYLGIVHPFFA) traverse the membrane as a helical segment. The Cytoplasmic segment spans residues 138-146 (RSHLRPKHA). The chain crosses the membrane as a helical span at residues 147–167 (WAVSAAGWVLAALLAMPTLSF). The Extracellular segment spans residues 168-206 (SHLKRPQQGAGNCSVARPEACIKCLGTADHGLAAYRAYS). An N-linked (GlcNAc...) asparagine glycan is attached at Asn179. A helical transmembrane segment spans residues 207 to 227 (LVLAGLGCGLPLLLTLAAYGA). Topologically, residues 228-245 (LGRAVLRSPGMTVAEKLR) are cytoplasmic. The chain crosses the membrane as a helical span at residues 246–266 (VAALVASGVALYASSYVPYHI). Over 267–308 (MRVLNVDARRRWSTRCPSFADIAQATAALELGPYVGYQVMRG) the chain is Extracellular. Residues 309 to 329 (LMPLAFCVHPLLYMAAVPSLG) traverse the membrane as a helical segment. Over 330-374 (CCCRHCPGYRDSWNPEDAKSTGQALPLNATAAPKPSEPQSRELSQ) the chain is Cytoplasmic. The segment at 345-374 (EDAKSTGQALPLNATAAPKPSEPQSRELSQ) is disordered.

Belongs to the G-protein coupled receptor 1 family. As to expression, highest expression in liver and spleen.

The protein resides in the cell membrane. Functionally, receptor for ATP and ADP coupled to G-proteins that activate both phosphatidylinositol-calcium and adenylyl cyclase second messenger systems. Not activated by UTP or UDP. In Homo sapiens (Human), this protein is P2Y purinoceptor 11 (P2RY11).